Here is a 466-residue protein sequence, read N- to C-terminus: Argininosuccinate lyase (466 aa).

It belongs to the lyase 1 family. Argininosuccinate lyase subfamily.

The protein localises to the cytoplasm. It carries out the reaction 2-(N(omega)-L-arginino)succinate = fumarate + L-arginine. It participates in amino-acid biosynthesis; L-arginine biosynthesis; L-arginine from L-ornithine and carbamoyl phosphate: step 3/3. This is Argininosuccinate lyase from Synechococcus sp. (strain ATCC 27144 / PCC 6301 / SAUG 1402/1) (Anacystis nidulans).